Reading from the N-terminus, the 457-residue chain is MALWGGRFTQAADQRFKQFNDSLRFDYRLAEQDIVGSVAWSKALVTVGVLTAEEQAQLEEALNVLLEDVRARPQQILESDAEDIHSWVEGKLIDKVGQLGKKLHTGRSRNDQVATDLKLWCKDTVSELLTANRQLQSALVETAQNNQDAVMPGYTHLQRAQPVTFAHWCLAYVEMLARDESRLQDALKRLDVSPLGCGALAGTAYEIDREQLAGWLGFASATRNSLDSVSDRDHVLELLSAAAIGMVHLSRFAEDLIFFNTGEAGFVELSDRVTSGSSLMPQKKNPDALELIRGKCGRVQGALTGMMMTLKGLPLAYNKDMQEDKEGLFDALDTWLDCLHMAALVLDGIQVKRPRCQEAAQQGYANATELADYLVAKGVPFREAHHIVGEAVVEAIRQGKPLEELPLTELQKFSPVIGEDVYPILSLQSCLDKRAAKGGVSPQQVARAIAFARARLG.

It belongs to the lyase 1 family. Argininosuccinate lyase subfamily.

The protein resides in the cytoplasm. The enzyme catalyses 2-(N(omega)-L-arginino)succinate = fumarate + L-arginine. It functions in the pathway amino-acid biosynthesis; L-arginine biosynthesis; L-arginine from L-ornithine and carbamoyl phosphate: step 3/3. In Escherichia coli O157:H7, this protein is Argininosuccinate lyase.